Reading from the N-terminus, the 308-residue chain is Phosphoribosylaminoimidazole-succinocarboxamide synthase (308 aa).

Belongs to the SAICAR synthetase family.

The enzyme catalyses 5-amino-1-(5-phospho-D-ribosyl)imidazole-4-carboxylate + L-aspartate + ATP = (2S)-2-[5-amino-1-(5-phospho-beta-D-ribosyl)imidazole-4-carboxamido]succinate + ADP + phosphate + 2 H(+). Its pathway is purine metabolism; IMP biosynthesis via de novo pathway; 5-amino-1-(5-phospho-D-ribosyl)imidazole-4-carboxamide from 5-amino-1-(5-phospho-D-ribosyl)imidazole-4-carboxylate: step 1/2. This is Phosphoribosylaminoimidazole-succinocarboxamide synthase from Xylella fastidiosa (strain 9a5c).